The sequence spans 330 residues: Aspartate--ammonia ligase (330 aa).

This sequence belongs to the class-II aminoacyl-tRNA synthetase family. AsnA subfamily.

The protein localises to the cytoplasm. The catalysed reaction is L-aspartate + NH4(+) + ATP = L-asparagine + AMP + diphosphate + H(+). It participates in amino-acid biosynthesis; L-asparagine biosynthesis; L-asparagine from L-aspartate (ammonia route): step 1/1. This Streptococcus thermophilus (strain ATCC BAA-250 / LMG 18311) protein is Aspartate--ammonia ligase.